Consider the following 568-residue polypeptide: DNA ligase 2 (568 aa).

Glu-254 contributes to the ATP binding site. Lys-256 (N6-AMP-lysine intermediate) is an active-site residue. The ATP site is built by Arg-261, Arg-276, Glu-306, Phe-346, Arg-425, and Lys-431.

The protein belongs to the ATP-dependent DNA ligase family. It depends on Mg(2+) as a cofactor.

It carries out the reaction ATP + (deoxyribonucleotide)n-3'-hydroxyl + 5'-phospho-(deoxyribonucleotide)m = (deoxyribonucleotide)n+m + AMP + diphosphate.. In terms of biological role, DNA ligase that seals nicks in double-stranded DNA during DNA replication, DNA recombination and DNA repair. The sequence is that of DNA ligase 2 from Methanosarcina mazei (strain ATCC BAA-159 / DSM 3647 / Goe1 / Go1 / JCM 11833 / OCM 88) (Methanosarcina frisia).